A 589-amino-acid chain; its full sequence is Zinc finger protein 703 (589 aa).

The disordered stretch occupies residues 102 to 315; sequence SQIGKPDPPP…GTGHIAPVSP (214 aa). The segment covering 113–122 has biased composition (low complexity); the sequence is SKLGSLSSSS. Residues 137–148 show a composition bias toward basic and acidic residues; it reads SGEHQNLDDKSS. Positions 179–188 are enriched in polar residues; it reads NGSSSSVTCT. Residues 196–206 show a composition bias toward low complexity; it reads SPRASSPQQTS. Over residues 214-230 the composition is skewed to polar residues; that stretch reads QSQSPLSQKTAHLQTTH. The span at 237–250 shows a compositional bias: low complexity; that stretch reads GSDPGNDSSSSGSD. Residues 251–262 show a composition bias toward basic and acidic residues; that stretch reads RNGKKDSDHNKS. Positions 272-299 are enriched in low complexity; the sequence is SSHARASVNSSSASSSSSPQPDSKTDSQ. The tract at residues 408–460 is required for interaction with Groucho and hdac2 plays an important role in repression of transcription; it reads VHDPSSALKSGFPLMYPTHHLHSLHPSSLSSSATSSLSHPLYTYGFMLPNETL. The segment at 462–490 adopts a C2H2-type zinc-finger fold; that stretch reads HACNWVSVGGPCDKRFATSEELLAHLRTH. The required for self-association and nuclear localization stretch occupies residues 498–589; the sequence is GKLLSGYPSS…LGSASALGYQ (92 aa).

Belongs to the Elbow/Noc family. In terms of assembly, self-associates. Interacts with nlz2. May interact with Groucho corepressor proteins.

The protein localises to the nucleus. Its subcellular location is the cytoplasm. In terms of biological role, transcriptional corepressor which does not bind directly to DNA and may regulate transcription through recruitment of histone deacetylases to gene promoters. Required for segmental gene expression during hindbrain development. May regulate cell adhesion, migration and proliferation. The sequence is that of Zinc finger protein 703 (znf703) from Danio rerio (Zebrafish).